Reading from the N-terminus, the 533-residue chain is MSAGCTQLVWGGRLHWGASHLLSCLLALCALWVLAAAEPTEGGSANVQGVGEAALYQGRGQHRVPSEDNVAVLSDQWEPSSFQPSSAFSGTDLGTMVADSYRGPGNSDRRSNKELPILLWWSENLFPHFPGDAERIDCPLSSCMVTKNKSVKLHKRTKSIIFYGTDFRAYEAPLPRLPHQTWALFHEESPMNNYVLSHLPGIRLFNYTATFSRESDYPLTLQWLPTIGYLHNPALSMAEKNRWRKNGYAPVLYMQSHCDVPSDRDRYVKELMKHLEIDSYGQCMKNREHPNKRLEDTSTATTEDPEFMAFTARYKFHLAMENAICADYMTEKLWRPMHLGAIPIYRGSPSVRDWMPNNHSIIMIDDFASPKELAEFIMTLDSDDEQYLKYLEYKKPGGTTNTFLLSSMEKREWGVNDMTAPNYLNGFECFVCDKENSRIKAEKTYKKSQQGGAAPEPHIADFNHMGCPMPTPGFGSAQEIPESDSWKQMWLQDYWQSFDQGEALTAMIQRNETNQDRFWDYMHETYIKRSMNH.

At 1-20 the chain is on the cytoplasmic side; sequence MSAGCTQLVWGGRLHWGASH. The chain crosses the membrane as a helical; Signal-anchor for type II membrane protein span at residues 21–37; the sequence is LLSCLLALCALWVLAAA. The Lumenal portion of the chain corresponds to 38 to 533; that stretch reads EPTEGGSANV…ETYIKRSMNH (496 aa). 3 N-linked (GlcNAc...) asparagine glycosylation sites follow: N148, N206, and N358. Residues C429 and C432 are joined by a disulfide bond. A glycan (N-linked (GlcNAc...) asparagine) is linked at N511.

Belongs to the glycosyltransferase 10 family.

It is found in the endoplasmic reticulum membrane. It catalyses the reaction L-threonyl-[protein] + GDP-beta-L-fucose = 3-O-(alpha-L-fucosyl)-L-threonyl-[protein] + GDP + H(+). The catalysed reaction is L-seryl-[protein] + GDP-beta-L-fucose = 3-O-(alpha-L-fucosyl)-L-seryl-[protein] + GDP + H(+). It participates in protein modification; protein glycosylation. Functionally, protein O-fucosyltransferase that specifically catalyzes O-fucosylation of serine or threonine residues in EMI domains of target proteins. Attaches fucose through an O-glycosidic linkage. O-fucosylation of EMI domain-containing proteins may be required for facilitating protein folding and secretion. This Xenopus tropicalis (Western clawed frog) protein is GDP-fucose protein O-fucosyltransferase 4 (fut11).